A 540-amino-acid polypeptide reads, in one-letter code: Chaperonin GroEL 2 (540 aa).

ATP-binding positions include 29–32, 86–90, glycine 413, and aspartate 492; these read TLGP and DGTTT. The disordered stretch occupies residues 521–540; sequence KPEKEKASVPGGGDMGGMDF. A compositionally biased stretch (gly residues) spans 530 to 540; the sequence is PGGGDMGGMDF.

The protein belongs to the chaperonin (HSP60) family. Forms a cylinder of 14 subunits composed of two heptameric rings stacked back-to-back. Interacts with the co-chaperonin GroES.

The protein localises to the secreted. It is found in the capsule. The protein resides in the cell surface. It localises to the cell wall. It catalyses the reaction ATP + H2O + a folded polypeptide = ADP + phosphate + an unfolded polypeptide.. Together with its co-chaperonin GroES, plays an essential role in assisting protein folding. The GroEL-GroES system forms a nano-cage that allows encapsulation of the non-native substrate proteins and provides a physical environment optimized to promote and accelerate protein folding. The sequence is that of Chaperonin GroEL 2 from Mycobacterium tuberculosis (strain ATCC 25177 / H37Ra).